Reading from the N-terminus, the 249-residue chain is 2,3-bisphosphoglycerate-dependent phosphoglycerate mutase (249 aa).

Substrate contacts are provided by residues arginine 9–asparagine 16, threonine 22–glycine 23, arginine 61, glutamate 88–tyrosine 91, lysine 99, arginine 115–arginine 116, and glycine 184–asparagine 185. The active-site Tele-phosphohistidine intermediate is histidine 10. Residue glutamate 88 is the Proton donor/acceptor of the active site.

It belongs to the phosphoglycerate mutase family. BPG-dependent PGAM subfamily. Homodimer.

The enzyme catalyses (2R)-2-phosphoglycerate = (2R)-3-phosphoglycerate. It functions in the pathway carbohydrate degradation; glycolysis; pyruvate from D-glyceraldehyde 3-phosphate: step 3/5. In terms of biological role, catalyzes the interconversion of 2-phosphoglycerate and 3-phosphoglycerate. This Xylella fastidiosa (strain 9a5c) protein is 2,3-bisphosphoglycerate-dependent phosphoglycerate mutase.